The primary structure comprises 191 residues: uncharacterized protein (191 aa).

The next 5 helical transmembrane spans lie at Ile24 to Gly44, Ile51 to Phe71, Leu114 to Phe134, Ala139 to Gly159, and Ile167 to Ile187.

Its subcellular location is the cell membrane. This is an uncharacterized protein from Methanocaldococcus jannaschii (strain ATCC 43067 / DSM 2661 / JAL-1 / JCM 10045 / NBRC 100440) (Methanococcus jannaschii).